A 450-amino-acid polypeptide reads, in one-letter code: RUN domain-containing protein 3B (450 aa).

In terms of domain architecture, RUN spans 48–180; it reads DDTSAEFINF…IDFSFCLKGE (133 aa). The segment at 203 to 225 is disordered; sequence DSISSDEEEMRTLGSSGSEAGTP. The stretch at 291-317 forms a coiled coil; sequence ISHKLEKEQLEIIILELQDQLTVLKNH.

It belongs to the RUNDC3 family.

This chain is RUN domain-containing protein 3B (rundc3b), found in Danio rerio (Zebrafish).